Here is a 101-residue protein sequence, read N- to C-terminus: MYAIIKASGQQFKVQEGDIICFDNMGLEPKSAVEFKEVLAVDNGELTVGTPFVEGAVVKGEVINEGRDKKVIIYKKRRRKDSKLKRGFRRDFTRVRITKIA.

Belongs to the bacterial ribosomal protein bL21 family. In terms of assembly, part of the 50S ribosomal subunit. Contacts protein L20.

Functionally, this protein binds to 23S rRNA in the presence of protein L20. This is Large ribosomal subunit protein bL21 from Sulfurovum sp. (strain NBC37-1).